Here is a 284-residue protein sequence, read N- to C-terminus: Diaminopimelate epimerase (284 aa).

The substrate site is built by asparagine 14 and asparagine 67. Cysteine 76 serves as the catalytic Proton donor. Residues 77–78, asparagine 166, asparagine 199, and 217–218 each bind substrate; these read GN and ER. The active-site Proton acceptor is cysteine 226. 227 to 228 is a binding site for substrate; sequence GT.

The protein belongs to the diaminopimelate epimerase family. As to quaternary structure, homodimer.

It localises to the cytoplasm. The enzyme catalyses (2S,6S)-2,6-diaminopimelate = meso-2,6-diaminopimelate. It functions in the pathway amino-acid biosynthesis; L-lysine biosynthesis via DAP pathway; DL-2,6-diaminopimelate from LL-2,6-diaminopimelate: step 1/1. Functionally, catalyzes the stereoinversion of LL-2,6-diaminopimelate (L,L-DAP) to meso-diaminopimelate (meso-DAP), a precursor of L-lysine and an essential component of the bacterial peptidoglycan. This chain is Diaminopimelate epimerase, found in Bacillus subtilis (strain 168).